We begin with the raw amino-acid sequence, 143 residues long: Transcriptional regulator SlyA (143 aa).

The HTH marR-type domain occupies Glu2–Gln135. The segment at residues Gln49 to Asp72 is a DNA-binding region (H-T-H motif).

The protein belongs to the SlyA family. Homodimer.

Transcription regulator that can specifically activate or repress expression of target genes. The polypeptide is Transcriptional regulator SlyA (Edwardsiella tarda).